Consider the following 261-residue polypeptide: uncharacterized protein (261 aa).

The disordered stretch occupies residues methionine 1–glutamine 22. 3 consecutive transmembrane segments (helical) span residues isoleucine 92–leucine 112, isoleucine 122–phenylalanine 142, and isoleucine 147–tyrosine 167.

The protein resides in the membrane. This is an uncharacterized protein from Dictyostelium discoideum (Social amoeba).